The following is a 428-amino-acid chain: Immunoglobulin superfamily containing leucine-rich repeat protein (428 aa).

The signal sequence occupies residues 1–18 (MQELRLLCLVVLVGLAQA). The LRRNT domain occupies 19–50 (CPEPCECGEKYGFHIADCAYRDLQAVPSGFPA). An N-linked (GlcNAc...) asparagine glycan is attached at asparagine 51. LRR repeat units follow at residues 51–72 (NVTT…AFRE), 75–96 (RLQS…ALAS), 99–122 (QLKS…HSLS), 123–144 (ALQL…AFRS), and 147–168 (ALRS…TFAP). In terms of domain architecture, LRRCT spans 180 to 231 (NPFDCTCGIVWFKTWALTTAVSIPEQDNITCTSPHVLKGTRLNRLLPLPCSA). The region spanning 232–343 (PSVQLTYQPS…GSAESSVNVA (112 aa)) is the Ig-like domain. Cysteine 257 and cysteine 327 are joined by a disulfide. Asparagine 309 carries N-linked (GlcNAc...) asparagine glycosylation.

Its subcellular location is the secreted. The sequence is that of Immunoglobulin superfamily containing leucine-rich repeat protein (ISLR) from Bos taurus (Bovine).